The sequence spans 286 residues: F-box/SPRY domain-containing protein 1 (286 aa).

N-acetylalanine is present on Ala2. Residues 33–82 (AGAGGRLPSRVLELVFSYLELSELRSCALVCKHWYRCLHGDENSEVWRSL) enclose the F-box domain. Residues 92–284 (LRTDILCNLP…VTLVYLGKPL (193 aa)) enclose the B30.2/SPRY domain.

The protein belongs to the FBXO45/Fsn family. As to quaternary structure, forms a complex with MYCBP2 and SKP1. Interacts with HEY1; leading to FBXO45 nuclear translocation. Interacts (via SPRY domain) with CDH2.

It is found in the secreted. The protein resides in the postsynaptic cell membrane. Its subcellular location is the presynaptic cell membrane. It localises to the nucleus. The protein operates within protein modification; protein ubiquitination. Functionally, component of E3 ubiquitin ligase complex consisting of FBXO45, MYCBP2 and SKP1. Functions in substrate recognition but also plays an important role in assembly of the complex. Required for normal neuromuscular synaptogenesis, axon pathfinding and neuronal migration. Regulates neuron migration during brain development through interaction with N-cadherin/CDH2 after secretion via a non-classical mechanism. Plays a role in the regulation of neurotransmission at mature neurons. May control synaptic activity by controlling UNC13A via ubiquitin dependent pathway. Specifically recognizes TP73, promoting its ubiquitination and degradation. Polyubiquitinates NMNAT2, an adenylyltransferase that acts as an axon maintenance factor, and regulates its stability and degradation by the proteasome. Also acts by ubiquitinating FBXW7 during prolonged mitotic arrest and promotes FBXW7 proteasomal degradation. Induces subsequently an increase in mitotic slippage and prevents mitotic cell death. In response to influenza infection, mediates interferon-lambda receptor IFNLR1 polyubiquitination and degradation through the ubiquitin-proteasome system by docking with its intracellular receptor domain. This chain is F-box/SPRY domain-containing protein 1 (FBXO45), found in Homo sapiens (Human).